A 446-amino-acid chain; its full sequence is UDP-N-acetylmuramoylalanine--D-glutamate ligase (446 aa).

An ATP-binding site is contributed by 115–121 (GSNGKST).

Belongs to the MurCDEF family.

The protein resides in the cytoplasm. It catalyses the reaction UDP-N-acetyl-alpha-D-muramoyl-L-alanine + D-glutamate + ATP = UDP-N-acetyl-alpha-D-muramoyl-L-alanyl-D-glutamate + ADP + phosphate + H(+). Its pathway is cell wall biogenesis; peptidoglycan biosynthesis. Its function is as follows. Cell wall formation. Catalyzes the addition of glutamate to the nucleotide precursor UDP-N-acetylmuramoyl-L-alanine (UMA). This chain is UDP-N-acetylmuramoylalanine--D-glutamate ligase, found in Hahella chejuensis (strain KCTC 2396).